The following is a 620-amino-acid chain: Membrane protein insertase YidC (620 aa).

A helical transmembrane segment spans residues 7–27 (NYLIAIALSVMVVLGWQFFYM). Over residues 37–58 (AEQAQQAQQAKTPATQATPGAA) the composition is skewed to low complexity. A disordered region spans residues 37–77 (AEQAQQAQQAKTPATQATPGAAVNGALPGQTQASATTSRED). 4 helical membrane passes run 399-419 (FGVAILLTTIAVKLLFFPLAS), 469-489 (WPLLLQIPVFFALYKVIYITI), 514-534 (LFGLLPFESPAMLHLGIWPII), and 560-580 (WMPLVFTFMLGSFPAGLVIYW).

It belongs to the OXA1/ALB3/YidC family. Type 1 subfamily. Interacts with the Sec translocase complex via SecD. Specifically interacts with transmembrane segments of nascent integral membrane proteins during membrane integration.

The protein localises to the cell inner membrane. Its function is as follows. Required for the insertion and/or proper folding and/or complex formation of integral membrane proteins into the membrane. Involved in integration of membrane proteins that insert both dependently and independently of the Sec translocase complex, as well as at least some lipoproteins. Aids folding of multispanning membrane proteins. The sequence is that of Membrane protein insertase YidC from Allorhizobium ampelinum (strain ATCC BAA-846 / DSM 112012 / S4) (Agrobacterium vitis (strain S4)).